The following is a 166-amino-acid chain: MHSSSPFYISNGNKIFFYINLGGVMNMTISFLSEHIFIKLVILTISFDTLLGCLSAIKSRKFNSSFGIDGGIRKVAMIACIFFLSVVDILTKFNFLFMLPQDCINFLRLKHLGISEFFSILFILYESVSILKNMCLCGLPVPKRLKEKIAILLDAMTDEMNAKDEK.

4 helical membrane passes run 15–35, 36–56, 77–97, and 111–131; these read IFFY…LSEH, IFIK…CLSA, MIAC…NFLF, and HLGI…VSIL.

It belongs to the bacteriophage holin family. In terms of assembly, homomultimer.

Its subcellular location is the cell membrane. Its function is as follows. Holin-like protein required for secretion of toxins A and B (TcdA and TcdB). Facilitates the release of toxins to the extracellular environment without causing the bacterial cell lysis. In terms of biological role, has weak activity, suggesting that it may act as a antiholin when multiple forms are produced. The chain is Holin-like protein TcdE from Clostridioides difficile (Peptoclostridium difficile).